A 466-amino-acid polypeptide reads, in one-letter code: UPF0652 protein C16A11.03c (466 aa).

It belongs to the UPF0652 family.

It is found in the cytoplasm. The protein resides in the nucleus. This Schizosaccharomyces pombe (strain 972 / ATCC 24843) (Fission yeast) protein is UPF0652 protein C16A11.03c.